A 600-amino-acid polypeptide reads, in one-letter code: Oligopeptide-binding protein OppA (600 aa).

Positions 1–22 (MNKLKVTLLASSVVLAATLLSA) are cleaved as a signal peptide. The N-palmitoyl cysteine moiety is linked to residue Cys23. Cys23 is lipidated: S-diacylglycerol cysteine.

Belongs to the bacterial solute-binding protein 5 family. As to quaternary structure, the complex is composed of two ATP-binding proteins (OppD and OppF), two transmembrane proteins (OppB and OppC) and a solute-binding protein (OppA).

The protein localises to the cell membrane. Functionally, part of the ABC transporter complex OppABCDF involved in the uptake of oligopeptides. Essential for uptake of peptides larger than three amino acids and for growth in milk. In Lactococcus lactis subsp. lactis (Streptococcus lactis), this protein is Oligopeptide-binding protein OppA.